Consider the following 506-residue polypeptide: Acetylcholine receptor subunit gamma (506 aa).

Residues 1–17 (MVLTLLLIICLALEVRS) form the signal peptide. The Extracellular portion of the chain corresponds to 18-235 (ENEEGRLIEK…IIFFLIIQRK (218 aa)). Asparagine 85 is a glycosylation site (N-linked (GlcNAc...) asparagine). An intrachain disulfide couples cysteine 145 to cysteine 159. The next 3 helical transmembrane spans lie at 236–260 (PLFYIINIIAPCVLISSLVVLVYFL), 269–287 (CTLSISVLLAQTIFLFLIA), and 303–324 (YLIFVMFVSMLIVMNCVIVLNV). At 325–466 (SLRTPNTHSL…WVLIGKVIDK (142 aa)) the chain is on the cytoplasmic side. Residue tyrosine 381 is modified to Phosphotyrosine; by Tyr-kinases. Residues 467–490 (ACFWIALLLFSIGTLAIFLTGHFN) traverse the membrane as a helical segment.

The protein belongs to the ligand-gated ion channel (TC 1.A.9) family. Acetylcholine receptor (TC 1.A.9.1) subfamily. Gamma/CHRNG sub-subfamily. In terms of assembly, pentamer of two alpha chains, and one each of the beta, delta, and gamma chains. In terms of processing, seems not to be glycosylated on Asn-158.

Its subcellular location is the postsynaptic cell membrane. It localises to the cell membrane. It carries out the reaction K(+)(in) = K(+)(out). The catalysed reaction is Na(+)(in) = Na(+)(out). Its function is as follows. After binding acetylcholine, the AChR responds by an extensive change in conformation that affects all subunits and leads to opening of an ion-conducting channel across the plasma membrane. This is Acetylcholine receptor subunit gamma (CHRNG) from Tetronarce californica (Pacific electric ray).